The sequence spans 474 residues: Bifunctional protein HldE (474 aa).

The tract at residues 1–321 (MILSSSLRPT…EYLHSSHQGE (321 aa)) is ribokinase. 198–201 (NKKE) is an ATP binding site. Residue D266 is part of the active site. Residues 348–474 (FTNGCFDILH…SAVVKKIQGS (127 aa)) are cytidylyltransferase.

The protein in the N-terminal section; belongs to the carbohydrate kinase PfkB family. It in the C-terminal section; belongs to the cytidylyltransferase family. Homodimer.

The enzyme catalyses D-glycero-beta-D-manno-heptose 7-phosphate + ATP = D-glycero-beta-D-manno-heptose 1,7-bisphosphate + ADP + H(+). It carries out the reaction D-glycero-beta-D-manno-heptose 1-phosphate + ATP + H(+) = ADP-D-glycero-beta-D-manno-heptose + diphosphate. It participates in nucleotide-sugar biosynthesis; ADP-L-glycero-beta-D-manno-heptose biosynthesis; ADP-L-glycero-beta-D-manno-heptose from D-glycero-beta-D-manno-heptose 7-phosphate: step 1/4. Its pathway is nucleotide-sugar biosynthesis; ADP-L-glycero-beta-D-manno-heptose biosynthesis; ADP-L-glycero-beta-D-manno-heptose from D-glycero-beta-D-manno-heptose 7-phosphate: step 3/4. Functionally, catalyzes the phosphorylation of D-glycero-D-manno-heptose 7-phosphate at the C-1 position to selectively form D-glycero-beta-D-manno-heptose-1,7-bisphosphate. In terms of biological role, catalyzes the ADP transfer from ATP to D-glycero-beta-D-manno-heptose 1-phosphate, yielding ADP-D-glycero-beta-D-manno-heptose. This is Bifunctional protein HldE from Wolinella succinogenes (strain ATCC 29543 / DSM 1740 / CCUG 13145 / JCM 31913 / LMG 7466 / NCTC 11488 / FDC 602W) (Vibrio succinogenes).